Reading from the N-terminus, the 546-residue chain is Chaperonin GroEL (546 aa).

ATP is bound by residues 29-32, Lys50, 86-90, Gly414, 477-479, and Asp493; these read TLGP, DGTTT, and NAL.

The protein belongs to the chaperonin (HSP60) family. In terms of assembly, forms a cylinder of 14 subunits composed of two heptameric rings stacked back-to-back. Interacts with the co-chaperonin GroES.

It is found in the cytoplasm. The enzyme catalyses ATP + H2O + a folded polypeptide = ADP + phosphate + an unfolded polypeptide.. Its function is as follows. Together with its co-chaperonin GroES, plays an essential role in assisting protein folding. The GroEL-GroES system forms a nano-cage that allows encapsulation of the non-native substrate proteins and provides a physical environment optimized to promote and accelerate protein folding. The protein is Chaperonin GroEL of Leptospira interrogans serogroup Icterohaemorrhagiae serovar copenhageni (strain Fiocruz L1-130).